We begin with the raw amino-acid sequence, 1572 residues long: MASEQDGFLPAATRGDSNWSGVSGWESALSAMRAEVPSIDSDDSSLSDCEEEELHIFQREDTNLIPDLSIELLDDGELNSEVVTRQMSLEKVEFSDSLEPSPNVCVPLSVQKAELDDTINSRNPETEQLCPEPIDNIQTESMVGIKDSEKEDGFRHVLHSSVTTVLKPQINSNVDSEYEIHPGNTEKEHLSTSALSSKPVGLSLQFLECLEQWDLNALLHQLKEEEVQEREMPPLILSMEESTERRHKLIMEKLVEFAAQQSEEVSSVPQLEEKEKEGTISKSSFRPYPDQKMYLKGSGKHPQSFSTICLDLRTTVSKMGQVTSLEQNPENPSQRNEQKEKHHLNKTDHTGKSLLLRNRHNIQNDSLSDANMSNSESLSKEKKELGTPTQRKQRPKSKVDISPKLQEMVGREEKDGREEQEKEKEILQYLPPKSLINSRADEFAQREKQEKEKKARLRMLTQLEDLKPRSSVNGRQPMAEATPILFHPETSYCPGISSLPDVARSGVETLLLTICLSSCGQVFIPGQHGARSSYPSLFLANTFHCLLTWLISLVPGVNTHGKVNAPFHVLGLQQAWQEEGLALYACLSPRQIATQSSPKIRKHKGKQDLRGTSSFYQRVSLFLSHNTLQSVIWWSEDVVERLQGKLFPLPTEVPAVRLSSIATLNSAPEAVEKVFSSACGFYWQTLETEEKINPLLSEIPTDSETEVVSVIVFERMLSNPTAFHHTLHIIQTEGLDVCGVRLLYPQANALHSYIDTVPSSYTGGDGQTLPVLALALRGTQAEHIWAEIAGPFDPQLARLTDQYSLNAMYGFKRGEPIMHWARKSGRLLQELSLWFGGRIPPSGSFNIGFQNPYSRSTQPRSANLRSRSDSEKDVTAFHDTDRCRPPALLTASILGDVFLVVSPAVPSAAYGDVIDICLHRGFALYGLRRLRLSAKRSAMLSMSSTQVSIFCPNVPHSQTDAQPCRQPRLHCFLLLLRKENAAHHTSGLIQALMNELAERGLLGAIHAKFSYICEVDPSFCFHVAPYTDNLLQSLGGSLHAMPDLSTVPMDMLSLRPFASDPEDEQVVVLTMSGKHTLRRAGYFLQKILRPTLKTPASNTGSVHDGFELLGLKWLPSLSRLQAKEITPYEVGDRPWQRSIEHLISNPALLCALRRSNAFAVLQHTIKQLAPTLGMEHPQLIASATPEIAFRQAALIFSDRDLVSDPESRSSLMYIPPTGINCRAGGTEDRRGTTESIFTYMLSGPPVLYTVLLLKPRIWSSALGKILYKVHQQKFILVGMKPVSLTTAMCSQILPEDVKKSEALCLTHCDYLTSGPCLALCLQRRGAVLKLLDVLGPEDPELCRAQDQFLWRAQYGTSAVQNGMYGSTSYQAAIRDIKTFFPEGLLFEESTVLQAEQIPKLTSDILVCSRSHRQTVKNPACGPELPTTDLPFTSALCQTTCLLFPPHMLRTSPPPYIPALEQLMAKEFHITAARLTAFDQLQAQLVAEMYSPGNYLTAKIKLLTEGPCLLVAAQRDNAVTCFPSLVHSDDRHNMSAQTLTEQVLCPQTESQANKMLSCFFDSLTPDSIHQILH.

Disordered stretches follow at residues 1 to 21 (MASE…NWSG), 262 to 304 (SEEV…HPQS), 324 to 428 (SLEQ…EILQ), and 849 to 871 (FQNP…SDSE). Polar residues predominate over residues 324 to 335 (SLEQNPENPSQR). The segment covering 336–351 (NEQKEKHHLNKTDHTG) has biased composition (basic and acidic residues). The segment covering 361–374 (NIQNDSLSDANMSN) has biased composition (polar residues). Residues 409–426 (VGREEKDGREEQEKEKEI) show a composition bias toward basic and acidic residues. Residues 849-865 (FQNPYSRSTQPRSANLR) are compositionally biased toward polar residues. An NDK region spans residues 1249 to 1382 (TVLLLKPRIW…IRDIKTFFPE (134 aa)).

In terms of assembly, interacts with DNAI2. As to expression, expression is enriched in multiciliated cells in the epidermis and the nephrostomes of the pronephros.

The protein localises to the dynein axonemal particle. It localises to the cytoplasm. In cyliated cells, dynein axonemal particle-specific protein required for deployment of ODA to the axoneme. Interacts with outer dynein arm (ODA) subunits. The polypeptide is Dynein axonemal assembly factor 8 (dnaaf8) (Xenopus laevis (African clawed frog)).